Consider the following 466-residue polypeptide: Zinc metalloproteinase/disintegrin (466 aa).

An N-terminal signal peptide occupies residues 1–6 (FPYQGS). A propeptide spanning residues 7–174 (SIILESGNVN…PIKKASQLIV (168 aa)) is cleaved from the precursor. Residues 180–377 (RYMEIVIVVD…ENPPCILNKP (198 aa)) enclose the Peptidase M12B domain. Residues E183 and D267 each contribute to the Ca(2+) site. Disulfide bonds link C291-C372, C331-C356, and C333-C339. H316 contacts Zn(2+). The active site involves E317. H320 and H326 together coordinate Zn(2+). The Ca(2+) site is built by C372 and N375. Residues 377-401 (PLRTDTVSTPVSGNELLEAGKDYDR) constitute a propeptide that is removed on maturation. In terms of domain architecture, Disintegrin spans 385 to 466 (TPVSGNELLE…GDCPRNPYHA (82 aa)). 3 cysteine pairs are disulfide-bonded: C422–C428, C427–C452, and C440–C459. The Cell attachment site motif lies at 444–446 (RGD).

It belongs to the venom metalloproteinase (M12B) family. P-II subfamily. P-IIa sub-subfamily. Monomer. The cofactor is Zn(2+). In terms of tissue distribution, expressed by the venom gland.

Its subcellular location is the secreted. Its function is as follows. Impairs hemostasis in the envenomed animal. Functionally, inhibits platelet aggregation induced by ADP, thrombin, platelet-activating factor and collagen. Acts by inhibiting fibrinogen interaction with platelet receptors GPIIb/GPIIIa (ITGA2B/ITGB3). The protein is Zinc metalloproteinase/disintegrin of Deinagkistrodon acutus (Hundred-pace snake).